The chain runs to 101 residues: NADH-quinone oxidoreductase subunit K (101 aa).

3 consecutive transmembrane segments (helical) span residues 4–24 (LGHY…GIFL), 30–50 (IVLL…FVAF), and 61–81 (VFVF…LAIL).

Belongs to the complex I subunit 4L family. NDH-1 is composed of 14 different subunits. Subunits NuoA, H, J, K, L, M, N constitute the membrane sector of the complex.

Its subcellular location is the cell inner membrane. The catalysed reaction is a quinone + NADH + 5 H(+)(in) = a quinol + NAD(+) + 4 H(+)(out). Its function is as follows. NDH-1 shuttles electrons from NADH, via FMN and iron-sulfur (Fe-S) centers, to quinones in the respiratory chain. The immediate electron acceptor for the enzyme in this species is believed to be ubiquinone. Couples the redox reaction to proton translocation (for every two electrons transferred, four hydrogen ions are translocated across the cytoplasmic membrane), and thus conserves the redox energy in a proton gradient. The protein is NADH-quinone oxidoreductase subunit K of Leptothrix cholodnii (strain ATCC 51168 / LMG 8142 / SP-6) (Leptothrix discophora (strain SP-6)).